Here is a 681-residue protein sequence, read N- to C-terminus: Serine/threonine-protein kinase PAK 6 (681 aa).

Disordered stretches follow at residues 1–30 (MFRK…DPKE), 149–169 (GGTP…PRVL), 200–256 (QSSP…ESSL), and 268–355 (TAAT…PRTW). One can recognise a CRIB domain in the interval 12-25 (ISAPQNFQHRVHTS). The linker stretch occupies residues 26–406 (FDPKEGKFVG…VVDQGDPRLL (381 aa)). Composition is skewed to low complexity over residues 201 to 212 (SSPPGASPPTGT) and 268 to 278 (TAATAPPSSSK). Over residues 308-333 (SLPSDQPVGTFSPLTTSDTSSPQKSL) the composition is skewed to polar residues. In terms of domain architecture, Protein kinase spans 407–658 (LDSYVKIGEG…AQELLDHPFL (252 aa)). ATP-binding positions include 413–421 (IGEGSTGIV) and lysine 436. The Proton acceptor role is filled by aspartate 526. Serine 560 carries the phosphoserine; by autocatalysis modification.

The protein belongs to the protein kinase superfamily. STE Ser/Thr protein kinase family. STE20 subfamily. In terms of assembly, interacts tightly with GTP-bound but not GDP-bound CDC42/p21 and RAC1. Interacts with the androgen receptor AR and the estrogen receptor ESR1. Interacts with IQGAP1 and PPM1B. Autophosphorylated. Phosphorylated by MAP2K6//MAPKK6, leading to PAK6 activation. Selectively expressed in brain and testis, with lower levels in multiple tissues including prostate and breast.

It localises to the cytoplasm. The protein localises to the nucleus. The enzyme catalyses L-seryl-[protein] + ATP = O-phospho-L-seryl-[protein] + ADP + H(+). The catalysed reaction is L-threonyl-[protein] + ATP = O-phospho-L-threonyl-[protein] + ADP + H(+). Functionally, serine/threonine protein kinase that plays a role in the regulation of gene transcription. The kinase activity is induced by various effectors including AR or MAP2K6/MAPKK6. Phosphorylates the DNA-binding domain of androgen receptor/AR and thereby inhibits AR-mediated transcription. Also inhibits ESR1-mediated transcription. May play a role in cytoskeleton regulation by interacting with IQGAP1. May protect cells from apoptosis through phosphorylation of BAD. The polypeptide is Serine/threonine-protein kinase PAK 6 (PAK6) (Homo sapiens (Human)).